The chain runs to 388 residues: tRNA(Ile)-lysidine synthase (388 aa).

51–56 (SGGRDS) serves as a coordination point for ATP.

It belongs to the tRNA(Ile)-lysidine synthase family.

Its subcellular location is the cytoplasm. It catalyses the reaction cytidine(34) in tRNA(Ile2) + L-lysine + ATP = lysidine(34) in tRNA(Ile2) + AMP + diphosphate + H(+). Its function is as follows. Ligates lysine onto the cytidine present at position 34 of the AUA codon-specific tRNA(Ile) that contains the anticodon CAU, in an ATP-dependent manner. Cytidine is converted to lysidine, thus changing the amino acid specificity of the tRNA from methionine to isoleucine. The chain is tRNA(Ile)-lysidine synthase from Bifidobacterium longum (strain DJO10A).